The sequence spans 2598 residues: Partially reducing polyketide synthase men1 (2598 aa).

One can recognise a Ketosynthase family 3 (KS3) domain in the interval 7–435; the sequence is SQSIAIVGLS…GSNAHAILDD (429 aa). Active-site for beta-ketoacyl synthase activity residues include C181, H316, and H358. A compositionally biased stretch (basic residues) spans 450 to 459; the sequence is GKSHHHHHQH. Disordered regions lie at residues 450 to 490 and 537 to 557; these read GKSH…NGTT and AEKQ…DPEK. The span at 474 to 490 shows a compositional bias: low complexity; it reads VNGTSEVNGTSGVNGTT. The 305-residue stretch at 611 to 915 folds into the Malonyl-CoA:ACP transacylase (MAT) domain; the sequence is YVFTGQGAQW…RGPVTQILQS (305 aa). The N-terminal hotdog fold stretch occupies residues 1008 to 1151; that stretch reads LGLIGAPMPN…GSVAVEFGAL (144 aa). A PKS/mFAS DH domain is found at 1008–1325; it reads LGLIGAPMPN…CVEMPSASGM (318 aa). Residues 1009–1323 are dehydratase (DH) domain; the sequence is GLIGAPMPNF…LVCVEMPSAS (315 aa). Residues 1169–1325 form a C-terminal hotdog fold region; sequence TISQEVDVFY…CVEMPSASGM (157 aa). Residues 1886–2197 form the Enoyl reductase (ER) domain; the sequence is GMLNTLCFEI…ARSRQDKIVI (312 aa). The Ketoreductase (KR) domain maps to 2222–2399; it reads TYLIAGGLGG…AATIDLGIVK (178 aa). Residues 2510-2587 enclose the Carrier domain; that stretch reads EAARLVSAAV…AFASDLAKKG (78 aa). At S2547 the chain carries O-(pantetheine 4'-phosphoryl)serine.

It depends on pantetheine 4'-phosphate as a cofactor.

It participates in secondary metabolite biosynthesis. Functionally, partially reducing polyketide synthase; part of the gene cluster that mediates the biosynthesis of menisporopsin A, a bioactive macrocyclic polylactone. The biosynthesis of menisporopsin A is performed by a reducing (man1) and a non-reducing (men2) polyketide synthase that catalyze the formation of each menisporopsin A subunits, while the esterification and cyclolactonization activities are probably peformed by the unusual thioesterase domain of men2. First, a reduced diketide intermediate, 3-hydroxybutyryl-S-ACP is produced by men1 and transferred to men2; this is followed by a second reduced diketide which is further elongated using 3 units of malonyl-coA to form a reduced pentaketide. The cyclization of this intermediate by the PT domain forms the second subunit, 2,4-dihydroxy-6-(2-hydroxy-n-propyl)benzoyl-S-ACP. The TE domain of men2 then esterifies the secondary hydroxyl group on the side chain of the second subunit with the acyl-TE of the first subunit to form the first ester intermediate. This process occurs iteratively to form a linear tetraester intermediate. The final subunit is formed by a similar process, except that an extra malonyl-CoA is required in an additional elongation step to form a reduced hexaketide intermediate, and the carbonyl group next to the secondary hydroxyl group is reduced by a trans-acting ketoreductase. Again, the PT domain catalyzes cyclization to form the largest subunit, 2,4-dihydroxy-6-(2,4-dihydroxy-n-pentyl) benzoyl-S-ACP. Then the linear pentaester intermediate is formed. In this step, if the intermediate transfer rate is slow, intra- molecular cyclization involving the secondary hydroxyl group of the pentaester intermediate may occur to form menisporopsin B. Alternatively, transfer of the pentaester intermediate to the TE domain would allow cyclolactonization to be catalyzed by the TE to form menisporopsin A. The protein is Partially reducing polyketide synthase men1 of Menisporopsis theobromae.